The sequence spans 487 residues: Aspartyl/glutamyl-tRNA(Asn/Gln) amidotransferase subunit B (487 aa).

This sequence belongs to the GatB/GatE family. GatB subfamily. Heterotrimer of A, B and C subunits.

It catalyses the reaction L-glutamyl-tRNA(Gln) + L-glutamine + ATP + H2O = L-glutaminyl-tRNA(Gln) + L-glutamate + ADP + phosphate + H(+). The enzyme catalyses L-aspartyl-tRNA(Asn) + L-glutamine + ATP + H2O = L-asparaginyl-tRNA(Asn) + L-glutamate + ADP + phosphate + 2 H(+). Its function is as follows. Allows the formation of correctly charged Asn-tRNA(Asn) or Gln-tRNA(Gln) through the transamidation of misacylated Asp-tRNA(Asn) or Glu-tRNA(Gln) in organisms which lack either or both of asparaginyl-tRNA or glutaminyl-tRNA synthetases. The reaction takes place in the presence of glutamine and ATP through an activated phospho-Asp-tRNA(Asn) or phospho-Glu-tRNA(Gln). The polypeptide is Aspartyl/glutamyl-tRNA(Asn/Gln) amidotransferase subunit B (Chlamydia caviae (strain ATCC VR-813 / DSM 19441 / 03DC25 / GPIC) (Chlamydophila caviae)).